The chain runs to 271 residues: Troponin T, fast skeletal muscle (271 aa).

Positions 1–21 (MSDEEVEHVEEEYEEEEEAQE) are enriched in acidic residues. The interval 1–74 (MSDEEVEHVE…EKVDFDDIQK (74 aa)) is disordered. N-acetylserine is present on serine 2. Serine 2 carries the phosphoserine modification. Composition is skewed to basic and acidic residues over residues 29 to 53 (EVHEVHEEVHEVHEPEEVQEEEKPR) and 62 to 74 (PEGEKVDFDDIQK). Residue serine 90 is modified to Phosphoserine. Over residues 113–155 (RAERAEQQRIRAEKERERQNRLAEEKARREEEEAKRRAEDDLK) the composition is skewed to basic and acidic residues. Residues 113–192 (RAERAEQQRI…TAREMKKKVL (80 aa)) form a disordered region. 3 positions are modified to phosphoserine: serine 161, serine 168, and serine 169. Residues 183–192 (TAREMKKKVL) are compositionally biased toward basic and acidic residues. Serine 205 carries the post-translational modification Phosphoserine. Tyrosine 221 is subject to Phosphotyrosine. A disordered region spans residues 249–271 (DQAQKHSKKAGTTPKGKVGGRWK).

This sequence belongs to the troponin T family.

Troponin T is the tropomyosin-binding subunit of troponin, the thin filament regulatory complex which confers calcium-sensitivity to striated muscle actomyosin ATPase activity. This chain is Troponin T, fast skeletal muscle (TNNT3), found in Sus scrofa (Pig).